The following is a 593-amino-acid chain: A-type ATP synthase subunit A (593 aa).

ATP is bound at residue 236-243; the sequence is GPFGSGKT.

This sequence belongs to the ATPase alpha/beta chains family. Has multiple subunits with at least A(3), B(3), C, D, E, F, H, I and proteolipid K(x).

It is found in the cell membrane. The catalysed reaction is ATP + H2O + 4 H(+)(in) = ADP + phosphate + 5 H(+)(out). Produces ATP from ADP in the presence of a proton gradient across the membrane. The archaeal alpha chain is a catalytic subunit. Functionally, component of the A-type ATP synthase that produces ATP from ADP in the presence of a proton gradient across the membrane. The A chain is the catalytic subunit. The protein is A-type ATP synthase subunit A of Pyrobaculum aerophilum (strain ATCC 51768 / DSM 7523 / JCM 9630 / CIP 104966 / NBRC 100827 / IM2).